The sequence spans 266 residues: Signal peptidase I (266 aa).

At 1–20 (MQTDNTKSNTNKTAKQEWGS) the chain is on the cytoplasmic side. A helical membrane pass occupies residues 21 to 41 (FAFVICIALLIRILIMEPFTV). Over 42–266 (PTGSMKATIL…IFRNLYNTDA (225 aa)) the chain is Periplasmic. Catalysis depends on residues Ser45 and Lys108.

This sequence belongs to the peptidase S26 family.

It is found in the cell inner membrane. It carries out the reaction Cleavage of hydrophobic, N-terminal signal or leader sequences from secreted and periplasmic proteins.. In terms of biological role, complements E.coli mutants temperature-sensitive for LepB function. This is Signal peptidase I (lepB) from Rickettsia rickettsii (strain Sheila Smith).